Consider the following 1030-residue polypeptide: uncharacterized protein (1030 aa).

Polar residues predominate over residues 1–15 (MSENSTDSKNFQFSE). The segment at 1–53 (MSENSTDSKNFQFSEGSRESSNDELKVLLRDTETKEDEKSSFSNSEEESIIEN) is disordered. Residues 16 to 40 (GSRESSNDELKVLLRDTETKEDEKS) show a composition bias toward basic and acidic residues. Serine 41 is modified (phosphoserine). A Helicase ATP-binding domain is found at 134–290 (IKCVERMESV…WISEIHKQPC (157 aa)). 147–154 (AHTSAGKT) contacts ATP. The short motif at 238 to 241 (DEVH) is the DEVH box element. The 205-residue stretch at 357-561 (SLERIINMVL…GMILNLMRIE (205 aa)) folds into the Helicase C-terminal domain.

This sequence belongs to the helicase family. SKI2 subfamily.

It is found in the nucleus. This is an uncharacterized protein from Schizosaccharomyces pombe (strain 972 / ATCC 24843) (Fission yeast).